The primary structure comprises 535 residues: uncharacterized protein (535 aa).

Disordered regions lie at residues Met1–Pro58, Glu211–Ile254, Arg313–Lys353, Arg376–Leu416, Gln421–Trp440, and Ser508–Asp535. Residues Ile22–Glu34 are compositionally biased toward basic and acidic residues. Residues Ala179–Arg342 form an SNW region. The span at Arg376–Glu393 shows a compositional bias: basic and acidic residues. Positions Glu511 to Asp535 are enriched in basic and acidic residues.

Belongs to the SNW family.

This is an uncharacterized protein from Caenorhabditis elegans.